Reading from the N-terminus, the 171-residue chain is Protein BTG1 (171 aa).

S159 carries the post-translational modification Phosphoserine.

It belongs to the BTG family. In terms of assembly, interacts with CNOT7 and CNOT8.

Functionally, anti-proliferative protein. The sequence is that of Protein BTG1 (Btg1) from Rattus norvegicus (Rat).